Reading from the N-terminus, the 115-residue chain is Cytochrome c oxidase assembly protein COX16 homolog, mitochondrial (115 aa).

The Mitochondrial matrix segment spans residues 1-6 (MSRLKF). Residues 7 to 29 (VRVGLPFFAIVLGSAYGLHFFQQ) form a helical membrane-spanning segment. Over 30–115 (VRFDFRKIKQ…RKVRELKSNV (86 aa)) the chain is Mitochondrial intermembrane.

Belongs to the COX16 family.

It localises to the mitochondrion inner membrane. In terms of biological role, required for the assembly of the mitochondrial respiratory chain complex IV (CIV), also known as cytochrome c oxidase. This Caenorhabditis elegans protein is Cytochrome c oxidase assembly protein COX16 homolog, mitochondrial.